The following is a 461-amino-acid chain: LL-diaminopimelate aminotransferase, chloroplastic (461 aa).

A chloroplast-targeting transit peptide spans 1–45 (MSSTHQLVSSMISSSSSTFLAPSNFNLRTRNACLPMAKRVNTCKC). Substrate is bound by residues Tyr72 and Gly99. Residues Tyr129, 163 to 164 (AK), Tyr187, Asn244, Tyr275, and 302 to 304 (SFS) contribute to the pyridoxal 5'-phosphate site. Substrate contacts are provided by Lys164, Tyr187, and Asn244. Lys305 is subject to N6-(pyridoxal phosphate)lysine. Pyridoxal 5'-phosphate contacts are provided by Arg313 and Asn344. Substrate contacts are provided by Asn344 and Arg439.

This sequence belongs to the class-I pyridoxal-phosphate-dependent aminotransferase family. LL-diaminopimelate aminotransferase subfamily. In terms of assembly, homodimer. It depends on pyridoxal 5'-phosphate as a cofactor. Highly expressed in seedlings, roots, stems, flowers and leaves. Lower expression in siliques.

The protein localises to the plastid. Its subcellular location is the chloroplast. The enzyme catalyses (2S,6S)-2,6-diaminopimelate + 2-oxoglutarate = (S)-2,3,4,5-tetrahydrodipicolinate + L-glutamate + H2O + H(+). It participates in amino-acid biosynthesis; L-lysine biosynthesis via DAP pathway; LL-2,6-diaminopimelate from (S)-tetrahydrodipicolinate (aminotransferase route): step 1/1. Its function is as follows. Required for lysine biosynthesis. Catalyzes the direct conversion of tetrahydrodipicolinate to LL-diaminopimelate, a reaction that requires three enzymes in E.coli. Not active with meso-diaminopimelate, lysine or ornithine as substrates. This chain is LL-diaminopimelate aminotransferase, chloroplastic (DAP), found in Arabidopsis thaliana (Mouse-ear cress).